Here is a 155-residue protein sequence, read N- to C-terminus: Phosphoprotein pp24 (155 aa).

A disordered region spans residues 1-50 (MEFEAEHEGLTASWVAPAPQGGKGAEGRAGVADEAGHGKTEAECAEDGEK). The span at 34-50 (EAGHGKTEAECAEDGEK) shows a compositional bias: basic and acidic residues. A coiled-coil region spans residues 76–107 (RKRIEAKYMDLLVEAERENKNLRKKYNIILDV).

This is Phosphoprotein pp24 (MDV008) from Gallus gallus (Chicken).